The chain runs to 243 residues: Probable transcriptional regulatory protein LGAS_1276 (243 aa).

The interval 1-22 is disordered; the sequence is MSGHSKWHNIQGRKNAQDAKRG.

The protein belongs to the TACO1 family.

Its subcellular location is the cytoplasm. The sequence is that of Probable transcriptional regulatory protein LGAS_1276 from Lactobacillus gasseri (strain ATCC 33323 / DSM 20243 / BCRC 14619 / CIP 102991 / JCM 1131 / KCTC 3163 / NCIMB 11718 / NCTC 13722 / AM63).